The following is a 703-amino-acid chain: UvrABC system protein B (703 aa).

Residues T33–R190 enclose the Helicase ATP-binding domain. G46–T53 contributes to the ATP binding site. The Beta-hairpin motif lies at Y99 to I122. The 154-residue stretch at Q436 to I589 folds into the Helicase C-terminal domain. Residues A659–E694 form the UVR domain.

Belongs to the UvrB family. As to quaternary structure, forms a heterotetramer with UvrA during the search for lesions. Interacts with UvrC in an incision complex.

Its subcellular location is the cytoplasm. Its function is as follows. The UvrABC repair system catalyzes the recognition and processing of DNA lesions. A damage recognition complex composed of 2 UvrA and 2 UvrB subunits scans DNA for abnormalities. Upon binding of the UvrA(2)B(2) complex to a putative damaged site, the DNA wraps around one UvrB monomer. DNA wrap is dependent on ATP binding by UvrB and probably causes local melting of the DNA helix, facilitating insertion of UvrB beta-hairpin between the DNA strands. Then UvrB probes one DNA strand for the presence of a lesion. If a lesion is found the UvrA subunits dissociate and the UvrB-DNA preincision complex is formed. This complex is subsequently bound by UvrC and the second UvrB is released. If no lesion is found, the DNA wraps around the other UvrB subunit that will check the other stand for damage. This is UvrABC system protein B from Bifidobacterium longum subsp. infantis (strain ATCC 15697 / DSM 20088 / JCM 1222 / NCTC 11817 / S12).